A 342-amino-acid polypeptide reads, in one-letter code: Dihydroorotase (342 aa).

The Zn(2+) site is built by His13 and His15. Substrate contacts are provided by residues 15 to 17 (HLR) and Asn41. Residues Lys98, His135, and His173 each contribute to the Zn(2+) site. Lys98 is modified (N6-carboxylysine). Residue His135 coordinates substrate. Residue Leu218 participates in substrate binding. Asp246 contacts Zn(2+). Residue Asp246 is part of the active site. Residues His250 and Ala262 each coordinate substrate.

Belongs to the metallo-dependent hydrolases superfamily. DHOase family. Class II DHOase subfamily. Homodimer. The cofactor is Zn(2+).

The catalysed reaction is (S)-dihydroorotate + H2O = N-carbamoyl-L-aspartate + H(+). The protein operates within pyrimidine metabolism; UMP biosynthesis via de novo pathway; (S)-dihydroorotate from bicarbonate: step 3/3. Its function is as follows. Catalyzes the reversible cyclization of carbamoyl aspartate to dihydroorotate. The polypeptide is Dihydroorotase (Vibrio vulnificus (strain CMCP6)).